The following is a 454-amino-acid chain: Allantoinase (454 aa).

Zn(2+)-binding residues include His-59, His-61, Lys-150, His-190, His-246, and Asp-319. Lys-150 bears the N6-carboxylysine mark.

It belongs to the metallo-dependent hydrolases superfamily. Allantoinase family. Homotetramer. It depends on Zn(2+) as a cofactor. In terms of processing, carboxylation allows a single lysine to coordinate two zinc ions.

It catalyses the reaction (S)-allantoin + H2O = allantoate + H(+). Its pathway is nitrogen metabolism; (S)-allantoin degradation; allantoate from (S)-allantoin: step 1/1. Its function is as follows. Catalyzes the conversion of allantoin (5-ureidohydantoin) to allantoic acid by hydrolytic cleavage of the five-member hydantoin ring. This chain is Allantoinase, found in Bacillus licheniformis (strain ATCC 14580 / DSM 13 / JCM 2505 / CCUG 7422 / NBRC 12200 / NCIMB 9375 / NCTC 10341 / NRRL NRS-1264 / Gibson 46).